Here is a 404-residue protein sequence, read N- to C-terminus: Interferon-activable protein 205-A (404 aa).

Residues 1-88 (MENEYKRLVL…AEILKKERSE (88 aa)) enclose the Pyrin domain. Positions 85 to 198 (ERSEVTEETS…KSQPQNQNIP (114 aa)) are disordered. Low complexity-rich tracts occupy residues 102-112 (ASPATPTSTTS) and 122-132 (TSTTQEETSTA). Residues 137 to 147 (GMSEEKTDVKK) show a composition bias toward basic and acidic residues. The segment covering 168–185 (QSPISQVSSSASSNIPSA) has biased composition (low complexity). A compositionally biased stretch (polar residues) spans 186–197 (KNQKSQPQNQNI). The region spanning 192–392 (PQNQNIPRGA…CGDHSFVKVT (201 aa)) is the HIN-200 domain.

This sequence belongs to the HIN-200 family.

The protein resides in the nucleus. Functionally, may act as a transcriptional regulator in the myeloid lineage. Inhibits cell growth via p53/TP53 and RB1-dependent and independent pathways. In Mus musculus (Mouse), this protein is Interferon-activable protein 205-A (Ifi205a).